Here is a 509-residue protein sequence, read N- to C-terminus: Autophagy-related protein 16 (509 aa).

7 WD repeats span residues 223–262 (AHEGGCGSIVFEYNSGTLFTGGQDRAVKMWDTNSGTLIKS), 265–304 (GSLGNILDMAVTHDNKSVIAATSSNNLFVWDVSSGRVRHT), 307–347 (GHTD…CTNT), 349–388 (LFTSNCNAICLSIDGLTVFSGHMDGNLRLWDIQTGKLLSE), 391–430 (GHSSAVTSVSLSRNGNRILTSGRDNVHNVFDTRTLEICGT), 437–478 (RLAS…SILK), and 480–509 (QTSPILCCSWSGIGKPLASADKNGYVCTWT).

The protein belongs to the WD repeat ATG16 family.

Its function is as follows. May play a role in autophagy. The sequence is that of Autophagy-related protein 16 from Arabidopsis thaliana (Mouse-ear cress).